The following is a 191-amino-acid chain: A-type ATP synthase subunit E (191 aa).

This sequence belongs to the V-ATPase E subunit family. As to quaternary structure, has multiple subunits with at least A(3), B(3), C, D, E, F, H, I and proteolipid K(x).

It localises to the cell membrane. In terms of biological role, component of the A-type ATP synthase that produces ATP from ADP in the presence of a proton gradient across the membrane. The sequence is that of A-type ATP synthase subunit E from Methanoregula boonei (strain DSM 21154 / JCM 14090 / 6A8).